The following is a 242-amino-acid chain: Phosphate import ATP-binding protein PstB 1 (242 aa).

One can recognise an ABC transporter domain in the interval 1-237 (MDLYYGSYRA…PKDQRTEDYI (237 aa)). 28 to 35 (GPSGCGKS) contacts ATP.

It belongs to the ABC transporter superfamily. Phosphate importer (TC 3.A.1.7) family. The complex is composed of two ATP-binding proteins (PstB), two transmembrane proteins (PstC and PstA) and a solute-binding protein (PstS).

It localises to the cell membrane. It carries out the reaction phosphate(out) + ATP + H2O = ADP + 2 phosphate(in) + H(+). Its function is as follows. Part of the ABC transporter complex PstSACB involved in phosphate import. Responsible for energy coupling to the transport system. The protein is Phosphate import ATP-binding protein PstB 1 of Symbiobacterium thermophilum (strain DSM 24528 / JCM 14929 / IAM 14863 / T).